Here is a 316-residue protein sequence, read N- to C-terminus: ATP synthase gamma chain (316 aa).

Belongs to the ATPase gamma chain family. As to quaternary structure, F-type ATPases have 2 components, CF(1) - the catalytic core - and CF(0) - the membrane proton channel. CF(1) has five subunits: alpha(3), beta(3), gamma(1), delta(1), epsilon(1). CF(0) has three main subunits: a, b and c.

It localises to the cellular thylakoid membrane. Its function is as follows. Produces ATP from ADP in the presence of a proton gradient across the membrane. The gamma chain is believed to be important in regulating ATPase activity and the flow of protons through the CF(0) complex. This is ATP synthase gamma chain from Prochlorococcus marinus (strain NATL2A).